The sequence spans 444 residues: Aflatoxin biosynthesis regulatory protein (444 aa).

Positions 1–26 are disordered; the sequence is MVDHISPRASPGPIRSSQTRRARKLR. The zn(2)-C6 fungal-type DNA-binding region spans 29–56; it reads CTSCASSKVRCTKEKPACARCIERGLAC. The disordered stretch occupies residues 64–167; it reads MGRNPRAPSP…QGLGGDLAGQ (104 aa). Basic residues predominate over residues 106-116; sequence TQAHTHAHSHP. The span at 120–130 shows a compositional bias: low complexity; the sequence is PQSHPQSNQPP. The span at 136 to 149 shows a compositional bias: polar residues; that stretch reads PNGSSSVSAIFSHQ.

Interacts with its co-regulator aflS.

The protein resides in the nucleus. The protein localises to the endosome. In terms of biological role, transcription factor involved in regulation of the aflatoxin biosynthesis gene cluster. Binds with its co-regulator aflS to AFLR1 elements (5'-TCGSWNNSCGR-3') present in the promoters of the aflatoxin cluster genes. The ratio of the expression data between aflS:aflR plays a crucial role in the regulation of aflatoxins production. A high ratio, produced at a range between 17 and 30 degrees Celsius, corresponds with the production profile of aflatoxin G1 biosynthesis. A low ratio, produced over 30 degrees Celsius, is related to aflatoxin B1 biosynthesis. The chain is Aflatoxin biosynthesis regulatory protein from Aspergillus parasiticus (strain ATCC 56775 / NRRL 5862 / SRRC 143 / SU-1).